A 764-amino-acid chain; its full sequence is uncharacterized protein (764 aa).

Residues 1–646 (MKEENGFAGF…LTKLYTFPFT (646 aa)) are Lumenal-facing. The segment at 22–173 (LNDTAPTKSQ…SAITAPSRKV (152 aa)) is disordered. N23 carries an N-linked (GlcNAc...) asparagine glycan. 2 stretches are compositionally biased toward polar residues: residues 25-41 (TAPT…NNEG) and 61-82 (SEAS…QSPS). Residue S80 is modified to Phosphoserine. Acidic residues predominate over residues 98–113 (ENQENEADEAENEETS). An N-linked (GlcNAc...) asparagine glycan is attached at N118. Residues 118–145 (NHTENTEEIAEESRPLERTHSGSNHHEA) show a composition bias toward basic and acidic residues. The segment covering 158-173 (NTLSQGSAITAPSRKV) has biased composition (polar residues). Residues 197-264 (RDFHRIFKVL…TEIVSVEKKS (68 aa)) enclose the GRAM domain. Residues N240 and N330 are each glycosylated (N-linked (GlcNAc...) asparagine). The interval 320-406 (ASGNHHSGSS…DGNSVKKMNE (87 aa)) is disordered. Positions 321 to 330 (SGNHHSGSSN) are enriched in low complexity. The segment covering 331–340 (QSINADSSAG) has biased composition (polar residues). Over residues 352–371 (ANDESSEDDDEDNNTDEANE) the composition is skewed to acidic residues. 2 N-linked (GlcNAc...) asparagine glycosylation sites follow: N364 and N376. Positions 389–399 (HSDNVVLSDGN) are enriched in polar residues. Residues 432–598 (LAHVLCSDVV…AFENYKVSPK (167 aa)) form the VASt domain. 2 N-linked (GlcNAc...) asparagine glycosylation sites follow: N442 and N554. Residues 598-613 (KGRRKKITKHTKKKNK) show a composition bias toward basic residues. The tract at residues 598-626 (KGRRKKITKHTKKKNKHASETSVAPEKVD) is disordered. An N-linked (GlcNAc...) asparagine glycan is attached at N627. Residues 647–667 (IITWLMHPTHLLLVVMFSMLV) traverse the membrane as a helical segment. At 668–764 (LQWWYMQQIL…LRKLEASGYI (97 aa)) the chain is on the cytoplasmic side.

Belongs to the YSP2 family.

The protein resides in the membrane. This is an uncharacterized protein from Schizosaccharomyces pombe (strain 972 / ATCC 24843) (Fission yeast).